The primary structure comprises 611 residues: Fatty acid photodecarboxylase, chloroplastic (611 aa).

The interval 1–22 is disordered; it reads MMLGPKTVTRGATKGAAPRSMA. The transit peptide at 1–36 directs the protein to the chloroplast; it reads MMLGPKTVTRGATKGAAPRSMAARRVGGARRLSVRA. FAD is bound by residues 55 to 56, E76, M125, S129, and 133 to 136; these read TA and NATL. Hexadecanoate is bound by residues C392, R412, Y427, and Q447. G582 is an FAD binding site.

Belongs to the GMC oxidoreductase family. FAD is required as a cofactor.

The protein localises to the plastid. It is found in the chloroplast. It carries out the reaction a long-chain fatty acid + hnu + H(+) = a long-chain alkane + CO2. The enzyme catalyses hnu + hexadecanoate + H(+) = pentadecane + CO2. With respect to regulation, activated by blue light and repressed by red light. Catalyzes the decarboxylation of free fatty acids to n-alkanes or n-alkenes in response to blue light. Substrate preference is toward fatty acids with C17 or C18 chains. Saturated fatty acids are converted to alkanes, not alkenes. The decarboxylation is initiated through electron abstraction from the fatty acid by the photo-excited FAD. The protein is Fatty acid photodecarboxylase, chloroplastic of Chlamydomonas reinhardtii (Chlamydomonas smithii).